We begin with the raw amino-acid sequence, 205 residues long: Small ribosomal subunit protein uS4 (205 aa).

Positions Asn-18 to Gly-49 are disordered. Positions Arg-94 to Asn-157 constitute an S4 RNA-binding domain.

It belongs to the universal ribosomal protein uS4 family. Part of the 30S ribosomal subunit. Contacts protein S5. The interaction surface between S4 and S5 is involved in control of translational fidelity.

In terms of biological role, one of the primary rRNA binding proteins, it binds directly to 16S rRNA where it nucleates assembly of the body of the 30S subunit. Functionally, with S5 and S12 plays an important role in translational accuracy. In Afipia carboxidovorans (strain ATCC 49405 / DSM 1227 / KCTC 32145 / OM5) (Oligotropha carboxidovorans), this protein is Small ribosomal subunit protein uS4.